The following is a 308-amino-acid chain: Transmembrane and ubiquitin-like domain-containing protein 1 (308 aa).

A helical membrane pass occupies residues valine 11–threonine 31. The interval threonine 39–serine 162 is disordered. Residues proline 63–glycine 93 are compositionally biased toward polar residues. Residues serine 103–valine 115 show a composition bias toward low complexity. The segment covering proline 132–leucine 149 has biased composition (polar residues). The 74-residue stretch at isoleucine 169–serine 242 folds into the Ubiquitin-like domain. The next 2 helical transmembrane spans lie at valine 253–tryptophan 273 and phenylalanine 283–phenylalanine 303.

It is found in the membrane. Its subcellular location is the cytoplasm. The protein localises to the nucleus. Its function is as follows. May contribute to the regulation of translation during cell-cycle progression. May contribute to the regulation of cell proliferation. The membrane form is involved in sterol-regulated ubiquitination and degradation of HMG-CoA reductase HMGCR. May be involved in centrosome assembly. The polypeptide is Transmembrane and ubiquitin-like domain-containing protein 1 (tmub1) (Xenopus laevis (African clawed frog)).